We begin with the raw amino-acid sequence, 78 residues long: RNA-binding protein KhpA (78 aa).

A KH domain is found at threonine 29–arginine 78.

Belongs to the KhpA RNA-binding protein family.

It localises to the cytoplasm. Its function is as follows. A probable RNA-binding protein. In Chlamydia muridarum (strain MoPn / Nigg), this protein is RNA-binding protein KhpA.